The chain runs to 544 residues: MTKFVFVTGGVVSSIGKGIVAASLGRLLKSRNYTVSILKLDPYINVDPGTMSPYQHGEVFVTDDGAETDLDLGHYERFTDTNMSKLNNVTTGAIYQAVIHKERRGDYQGSTVQVIPHVTQEIKERIRRVARETNPDVVLVEVGGTVGDIESLPFLEAIRQFRKDVGRANVAYVHVTLVPLIKAAGEMKTKPTQHSVKELRSIGIQPDVLVCRCEQPLPRGIKEKISEFCDVPVECVIQAQDAPSIYDVPLVLEQEGLAQRVLEILNLDPQQPDLREWELLVQRLHHPQEQVEIAIVGKYVRLTDAYLSVAEALRHAGLALNAGVTLRWISSEEIEERGPEALLSGVDGVVVPGGFGNRGIEGKVASICYVRERGIPFLGLCLGMQCAVIDWGCHIAQLERANSYEFDPDTPHPVISLLPEQKDVEDLGGTLRLGLYPCRIMPNTLAAKLYGEAIIYERHRHRYEFNNAYRSLFLDSGYVISGVSPDNRLVEIIELPSHPFFIATQFHPEFRSRPNRPHPLFLGLIEAALRSRPQPRPLQLQKMG.

Residues 1–267 (MTKFVFVTGG…AQRVLEILNL (267 aa)) form an amidoligase domain region. Position 13 (S13) interacts with CTP. S13 lines the UTP pocket. 14 to 19 (SIGKGI) serves as a coordination point for ATP. Y54 is an L-glutamine binding site. D71 contributes to the ATP binding site. 2 residues coordinate Mg(2+): D71 and E141. CTP-binding positions include 148–150 (DIE), 188–193 (KTKPTQ), and K224. Residues 188-193 (KTKPTQ) and K224 each bind UTP. Positions 292 to 534 (EIAIVGKYVR…IEAALRSRPQ (243 aa)) constitute a Glutamine amidotransferase type-1 domain. G354 lines the L-glutamine pocket. The active-site Nucleophile; for glutamine hydrolysis is the C381. Residues 382 to 385 (LGMQ), E405, and R462 each bind L-glutamine. Catalysis depends on residues H507 and E509.

Belongs to the CTP synthase family. Homotetramer.

It catalyses the reaction UTP + L-glutamine + ATP + H2O = CTP + L-glutamate + ADP + phosphate + 2 H(+). It carries out the reaction L-glutamine + H2O = L-glutamate + NH4(+). The enzyme catalyses UTP + NH4(+) + ATP = CTP + ADP + phosphate + 2 H(+). Its pathway is pyrimidine metabolism; CTP biosynthesis via de novo pathway; CTP from UDP: step 2/2. With respect to regulation, allosterically activated by GTP, when glutamine is the substrate; GTP has no effect on the reaction when ammonia is the substrate. The allosteric effector GTP functions by stabilizing the protein conformation that binds the tetrahedral intermediate(s) formed during glutamine hydrolysis. Inhibited by the product CTP, via allosteric rather than competitive inhibition. Its function is as follows. Catalyzes the ATP-dependent amination of UTP to CTP with either L-glutamine or ammonia as the source of nitrogen. Regulates intracellular CTP levels through interactions with the four ribonucleotide triphosphates. In Synechococcus sp. (strain JA-2-3B'a(2-13)) (Cyanobacteria bacterium Yellowstone B-Prime), this protein is CTP synthase.